The chain runs to 530 residues: Hyalin (530 aa).

HYR domains lie at 1–66 (NVEI…TVTA), 67–150 (TDSI…NVVE), 151–234 (VDTT…NVVE), 235–319 (VDTT…NVVE), 320–403 (VDTT…NIVE), 404–486 (EDTT…TVNT), and 487–530 (VDTT…ASLV).

As to quaternary structure, homooligomer in presence of calcium. In terms of processing, glycosylated.

The protein localises to the secreted. Its subcellular location is the extracellular space. It is found in the extracellular matrix. Major constituent of the hyaline layer. The hyaline layer of echinoderm embryos is an extraembryonic matrix that functions as a substrate for cell adhesion through early development. This chain is Hyalin, found in Lytechinus variegatus (Green sea urchin).